We begin with the raw amino-acid sequence, 285 residues long: N(G),N(G)-dimethylarginine dimethylaminohydrolase 1 (285 aa).

At Ala-2 the chain carries N-acetylalanine. Residues Leu-30, Asp-73, 78 to 79 (ED), Arg-98, and Arg-145 contribute to the substrate site. Catalysis depends on His-173, which acts as the Proton donor. An S-nitrosocysteine modification is found at Cys-222. Residue Val-268 participates in substrate binding. Cys-274 bears the S-nitrosocysteine mark. The active-site Nucleophile is Cys-274. Position 274 (Cys-274) interacts with Zn(2+).

Belongs to the DDAH family. Monomer. Detected in brain, liver, kidney and pancreas, and at low levels in skeletal muscle.

The catalysed reaction is N(omega),N(omega)-dimethyl-L-arginine + H2O = dimethylamine + L-citrulline. It catalyses the reaction N(omega)-methyl-L-arginine + H2O = L-citrulline + methylamine. Inhibited by zinc ions. Enzyme purified in the absence of 1,10-phenanthroline contains on average 0.4 zinc atoms per subunit. Inhibited by 4-hydroxy-nonenal through the formation of a covalent adduct with His-173. Competitively inhibited by N(5)-iminopropyl-ornithine. Its function is as follows. Hydrolyzes N(G),N(G)-dimethyl-L-arginine (ADMA) and N(G)-monomethyl-L-arginine (MMA) which act as inhibitors of NOS. Has therefore a role in the regulation of nitric oxide generation. In Homo sapiens (Human), this protein is N(G),N(G)-dimethylarginine dimethylaminohydrolase 1.